Consider the following 840-residue polypeptide: Kinesin-like protein KIN-14J (840 aa).

The segment at 1-74 (MEADPAPSST…KGEEPVVSAE (74 aa)) is disordered. The Kinesin motor domain maps to 177–501 (NIRVFCRCRP…LNFASRVRAI (325 aa)). 260 to 267 (GQTGTGKT) is a binding site for ATP. Residues 517–594 (KLKQMTEKIR…KKAARDTARS (78 aa)) adopt a coiled-coil conformation. A compositionally biased stretch (basic and acidic residues) spans 581–593 (LANEKKAARDTAR). The tract at residues 581–617 (LANEKKAARDTARSTKPPLAPMRQRPPLGRIGNHIPP) is disordered.

The protein belongs to the TRAFAC class myosin-kinesin ATPase superfamily. Kinesin family. KIN-14 subfamily.

This chain is Kinesin-like protein KIN-14J, found in Oryza sativa subsp. japonica (Rice).